The chain runs to 175 residues: Large ribosomal subunit protein uL10 (175 aa).

The protein belongs to the universal ribosomal protein uL10 family. As to quaternary structure, part of the ribosomal stalk of the 50S ribosomal subunit. The N-terminus interacts with L11 and the large rRNA to form the base of the stalk. The C-terminus forms an elongated spine to which L12 dimers bind in a sequential fashion forming a multimeric L10(L12)X complex.

Its function is as follows. Forms part of the ribosomal stalk, playing a central role in the interaction of the ribosome with GTP-bound translation factors. This Prochlorococcus marinus (strain MIT 9313) protein is Large ribosomal subunit protein uL10.